The primary structure comprises 845 residues: Alanine--tRNA ligase (845 aa).

The Zn(2+) site is built by His-552, His-556, Cys-653, and His-657.

This sequence belongs to the class-II aminoacyl-tRNA synthetase family. Requires Zn(2+) as cofactor.

Its subcellular location is the cytoplasm. It carries out the reaction tRNA(Ala) + L-alanine + ATP = L-alanyl-tRNA(Ala) + AMP + diphosphate. Catalyzes the attachment of alanine to tRNA(Ala) in a two-step reaction: alanine is first activated by ATP to form Ala-AMP and then transferred to the acceptor end of tRNA(Ala). Also edits incorrectly charged Ser-tRNA(Ala) and Gly-tRNA(Ala) via its editing domain. The sequence is that of Alanine--tRNA ligase from Campylobacter hominis (strain ATCC BAA-381 / DSM 21671 / CCUG 45161 / LMG 19568 / NCTC 13146 / CH001A).